We begin with the raw amino-acid sequence, 932 residues long: DNA mismatch repair protein MutS (932 aa).

ATP is bound at residue 615-622 (GPNMAGKS).

This sequence belongs to the DNA mismatch repair MutS family.

Functionally, this protein is involved in the repair of mismatches in DNA. It is possible that it carries out the mismatch recognition step. This protein has a weak ATPase activity. The chain is DNA mismatch repair protein MutS from Clostridium botulinum (strain Kyoto / Type A2).